Reading from the N-terminus, the 451-residue chain is SH2 domain-containing protein 7 (451 aa).

The SH2 domain maps to 51–142 (WFHGFITRKQ…PFKEMLTAAC (92 aa)). 3 disordered regions span residues 180-232 (KAAS…SLLE), 256-321 (LGTE…SDAM), and 408-436 (GTPE…THKP). The segment covering 221–232 (SPLPEKSSSLLE) has biased composition (low complexity). A compositionally biased stretch (basic and acidic residues) spans 279–291 (EAQRRLSDGEQNR). Residues 306–316 (QGPTESPTSWG) are compositionally biased toward polar residues. The segment covering 426-436 (KSKETGRTHKP) has biased composition (basic and acidic residues).

The protein is SH2 domain-containing protein 7 (SH2D7) of Homo sapiens (Human).